Reading from the N-terminus, the 94-residue chain is Evasin P1086 (94 aa).

An N-terminal signal peptide occupies residues 1 to 28; sequence MAFNVITFLQLAVFVVILFNINLHSASA. 3 cysteine pairs are disulfide-bonded: C48-C67, C52-C69, and C63-C80. N74 carries an N-linked (GlcNAc...) asparagine glycan.

It localises to the secreted. Salivary chemokine-binding protein which binds to host chemokines CXCL1, CXCL2, CXCL3, CXCL5, CXCL6, CXCL10, CXCL12 and CXCL13. In Ixodes ricinus (Common tick), this protein is Evasin P1086.